The primary structure comprises 130 residues: Protein NrdI (130 aa).

It belongs to the NrdI family.

Its function is as follows. Probably involved in ribonucleotide reductase function. The chain is Protein NrdI from Staphylococcus carnosus (strain TM300).